A 443-amino-acid polypeptide reads, in one-letter code: Carbohydrate sulfotransferase 9 (443 aa).

The Cytoplasmic segment spans residues 1–12 (MQPSEMVMNPKQ). The helical; Signal-anchor for type II membrane protein transmembrane segment at 13–33 (VFLSVLIFGVAGLLLFMYLQV) threads the bilayer. Topologically, residues 34–443 (WIEEQHTGRV…LMFNYTTPFL (410 aa)) are lumenal. Positions 108 to 128 (LTKTSHSQGGDQALSKSTGSP) are enriched in polar residues. Residues 108–132 (LTKTSHSQGGDQALSKSTGSPTEKL) are disordered. An N-linked (GlcNAc...) asparagine glycan is attached at Asn-159. 3'-phosphoadenylyl sulfate is bound at residue 220–226 (PKAGCSN). N-linked (GlcNAc...) asparagine glycosylation occurs at Asn-243. 280–288 (RDPMERLVS) is a binding site for 3'-phosphoadenylyl sulfate. 2 N-linked (GlcNAc...) asparagine glycosylation sites follow: Asn-324 and Asn-437.

Belongs to the sulfotransferase 2 family. As to expression, highly expressed in trachea. Also expressed in fetal lung, adult pancreas, testis and salivary gland. Expressed at low level in pituitary gland, apex of the heart, adult lung, prostate and mammary gland. Weakly or not expressed in heart, liver and spinal cord.

The protein localises to the golgi apparatus membrane. The protein resides in the secreted. Its function is as follows. Catalyzes the transfer of sulfate to position 4 of non-reducing N-acetylgalactosamine (GalNAc) residues in both N-glycans and O-glycans. Participates in biosynthesis of glycoprotein hormones lutropin and thyrotropin, by mediating sulfation of their carbohydrate structures. Has a higher activity toward carbonic anhydrase VI than toward lutropin. Only active against terminal GalNAcbeta1,GalNAcbeta. Isoform 2, but not isoform 1, is active toward chondroitin. The chain is Carbohydrate sulfotransferase 9 (CHST9) from Homo sapiens (Human).